Consider the following 331-residue polypeptide: Transmembrane protein 59-like (331 aa).

The N-terminal stretch at 1–21 (MAAVALPLLLLLASPATPTPA) is a signal peptide. The interval 15–62 (PATPTPARDPFSPQLGDTQRCQQRCRQRHPGLPPAQPEPEGPSESPNN) is disordered. The segment covering 45 to 54 (GLPPAQPEPE) has biased composition (pro residues). The N-linked (GlcNAc...) asparagine glycan is linked to N90. A helical transmembrane segment spans residues 258-278 (VLFCCLFLSVLIILWLSCCTL). The short motif at 329–331 (TTL) is the Microbody targeting signal element.

Belongs to the TMEM59 family.

The protein localises to the golgi apparatus membrane. In terms of biological role, modulates the O-glycosylation and complex N-glycosylation steps occurring during the Golgi maturation of APP. Inhibits APP transport to the cell surface and further shedding. This chain is Transmembrane protein 59-like (Tmem59l), found in Rattus norvegicus (Rat).